The sequence spans 283 residues: ATP synthase gamma chain (283 aa).

Belongs to the ATPase gamma chain family. As to quaternary structure, F-type ATPases have 2 components, CF(1) - the catalytic core - and CF(0) - the membrane proton channel. CF(1) has five subunits: alpha(3), beta(3), gamma(1), delta(1), epsilon(1). CF(0) has three main subunits: a, b and c.

The protein localises to the cell membrane. Functionally, produces ATP from ADP in the presence of a proton gradient across the membrane. The gamma chain is believed to be important in regulating ATPase activity and the flow of protons through the CF(0) complex. This Desulforamulus reducens (strain ATCC BAA-1160 / DSM 100696 / MI-1) (Desulfotomaculum reducens) protein is ATP synthase gamma chain.